The chain runs to 275 residues: Light-independent protochlorophyllide reductase iron-sulfur ATP-binding protein (275 aa).

Residues 10 to 15 (GIGKST) and Lys39 contribute to the ATP site. Residue Ser14 coordinates Mg(2+). 2 residues coordinate [4Fe-4S] cluster: Cys95 and Cys129. 180-181 (NR) is a binding site for ATP.

The protein belongs to the NifH/BchL/ChlL family. Homodimer. Protochlorophyllide reductase is composed of three subunits; ChlL, ChlN and ChlB. It depends on [4Fe-4S] cluster as a cofactor.

It catalyses the reaction chlorophyllide a + oxidized 2[4Fe-4S]-[ferredoxin] + 2 ADP + 2 phosphate = protochlorophyllide a + reduced 2[4Fe-4S]-[ferredoxin] + 2 ATP + 2 H2O. It functions in the pathway porphyrin-containing compound metabolism; chlorophyll biosynthesis (light-independent). In terms of biological role, component of the dark-operative protochlorophyllide reductase (DPOR) that uses Mg-ATP and reduced ferredoxin to reduce ring D of protochlorophyllide (Pchlide) to form chlorophyllide a (Chlide). This reaction is light-independent. The L component serves as a unique electron donor to the NB-component of the complex, and binds Mg-ATP. The protein is Light-independent protochlorophyllide reductase iron-sulfur ATP-binding protein of Gloeobacter violaceus (strain ATCC 29082 / PCC 7421).